A 271-amino-acid polypeptide reads, in one-letter code: Regulatory protein RecX (271 aa).

It belongs to the RecX family.

It is found in the cytoplasm. Modulates RecA activity. In Lactobacillus gasseri (strain ATCC 33323 / DSM 20243 / BCRC 14619 / CIP 102991 / JCM 1131 / KCTC 3163 / NCIMB 11718 / NCTC 13722 / AM63), this protein is Regulatory protein RecX.